Reading from the N-terminus, the 411-residue chain is Arginine deiminase (411 aa).

Cys-401 (amidino-cysteine intermediate) is an active-site residue.

Belongs to the arginine deiminase family.

The protein resides in the cytoplasm. It catalyses the reaction L-arginine + H2O = L-citrulline + NH4(+). Its pathway is amino-acid degradation; L-arginine degradation via ADI pathway; carbamoyl phosphate from L-arginine: step 1/2. This Staphylococcus aureus (strain bovine RF122 / ET3-1) protein is Arginine deiminase.